The sequence spans 469 residues: ATP synthase subunit beta (469 aa).

An ATP-binding site is contributed by 156–163 (GGAGVGKT).

This sequence belongs to the ATPase alpha/beta chains family. F-type ATPases have 2 components, CF(1) - the catalytic core - and CF(0) - the membrane proton channel. CF(1) has five subunits: alpha(3), beta(3), gamma(1), delta(1), epsilon(1). CF(0) has three main subunits: a(1), b(2) and c(9-12). The alpha and beta chains form an alternating ring which encloses part of the gamma chain. CF(1) is attached to CF(0) by a central stalk formed by the gamma and epsilon chains, while a peripheral stalk is formed by the delta and b chains.

Its subcellular location is the cell membrane. The catalysed reaction is ATP + H2O + 4 H(+)(in) = ADP + phosphate + 5 H(+)(out). Its function is as follows. Produces ATP from ADP in the presence of a proton gradient across the membrane. The catalytic sites are hosted primarily by the beta subunits. The sequence is that of ATP synthase subunit beta from Bacillus cereus (strain AH820).